Consider the following 206-residue polypeptide: Large ribosomal subunit protein uL4 (206 aa).

The disordered stretch occupies residues 47–94; the sequence is NRAQKGRSEIAKSTRKPFRQKGTGNARAGMASSPLWRGGGKIFPNSPD.

The protein belongs to the universal ribosomal protein uL4 family. Part of the 50S ribosomal subunit.

One of the primary rRNA binding proteins, this protein initially binds near the 5'-end of the 23S rRNA. It is important during the early stages of 50S assembly. It makes multiple contacts with different domains of the 23S rRNA in the assembled 50S subunit and ribosome. In terms of biological role, forms part of the polypeptide exit tunnel. The sequence is that of Large ribosomal subunit protein uL4 from Azoarcus sp. (strain BH72).